Consider the following 138-residue polypeptide: MLTDPIADMLTRIRNATRVYKESTDVPASRFKEEILRILAREGFIKGYERVDVDGKPYLRVYLKYGPRRQGPDPRPEQVIHHIRRISKPGRRVYVGVKEIPRVRRGLGIAILSTSKGVLTDREARKLGVGGELICEVW.

Belongs to the universal ribosomal protein uS8 family. As to quaternary structure, part of the 30S ribosomal subunit. Contacts proteins S5 and S12.

One of the primary rRNA binding proteins, it binds directly to 16S rRNA central domain where it helps coordinate assembly of the platform of the 30S subunit. This is Small ribosomal subunit protein uS8 (rpsH) from Thermus thermophilus (strain ATCC BAA-163 / DSM 7039 / HB27).